A 419-amino-acid polypeptide reads, in one-letter code: Serine--tRNA ligase (419 aa).

Residue 226–228 coordinates L-serine; sequence TSE. ATP contacts are provided by residues 257–259 and V273; that span reads RRE. E280 lines the L-serine pocket. Residue 344–347 coordinates ATP; sequence ELTS. T379 serves as a coordination point for L-serine.

It belongs to the class-II aminoacyl-tRNA synthetase family. Type-1 seryl-tRNA synthetase subfamily. Homodimer. The tRNA molecule binds across the dimer.

It is found in the cytoplasm. It carries out the reaction tRNA(Ser) + L-serine + ATP = L-seryl-tRNA(Ser) + AMP + diphosphate + H(+). The catalysed reaction is tRNA(Sec) + L-serine + ATP = L-seryl-tRNA(Sec) + AMP + diphosphate + H(+). The protein operates within aminoacyl-tRNA biosynthesis; selenocysteinyl-tRNA(Sec) biosynthesis; L-seryl-tRNA(Sec) from L-serine and tRNA(Sec): step 1/1. In terms of biological role, catalyzes the attachment of serine to tRNA(Ser). Is also able to aminoacylate tRNA(Sec) with serine, to form the misacylated tRNA L-seryl-tRNA(Sec), which will be further converted into selenocysteinyl-tRNA(Sec). This is Serine--tRNA ligase from Corynebacterium diphtheriae (strain ATCC 700971 / NCTC 13129 / Biotype gravis).